A 184-amino-acid polypeptide reads, in one-letter code: ATP synthase subunit b (184 aa).

A helical membrane pass occupies residues 24–44 (ILVVVVGFALLMFIVIKFIVP).

It belongs to the ATPase B chain family. In terms of assembly, F-type ATPases have 2 components, F(1) - the catalytic core - and F(0) - the membrane proton channel. F(1) has five subunits: alpha(3), beta(3), gamma(1), delta(1), epsilon(1). F(0) has three main subunits: a(1), b(2) and c(10-14). The alpha and beta chains form an alternating ring which encloses part of the gamma chain. F(1) is attached to F(0) by a central stalk formed by the gamma and epsilon chains, while a peripheral stalk is formed by the delta and b chains.

It localises to the cell membrane. In terms of biological role, f(1)F(0) ATP synthase produces ATP from ADP in the presence of a proton or sodium gradient. F-type ATPases consist of two structural domains, F(1) containing the extramembraneous catalytic core and F(0) containing the membrane proton channel, linked together by a central stalk and a peripheral stalk. During catalysis, ATP synthesis in the catalytic domain of F(1) is coupled via a rotary mechanism of the central stalk subunits to proton translocation. Functionally, component of the F(0) channel, it forms part of the peripheral stalk, linking F(1) to F(0). The chain is ATP synthase subunit b (atpF) from Micrococcus luteus (strain ATCC 4698 / DSM 20030 / JCM 1464 / CCM 169 / CCUG 5858 / IAM 1056 / NBRC 3333 / NCIMB 9278 / NCTC 2665 / VKM Ac-2230) (Micrococcus lysodeikticus).